A 290-amino-acid polypeptide reads, in one-letter code: MKGIYSALMVPYNEDGSINEKGLREIIRYNIDKMKVDGLYVGGSTGENFMISTEEKKRVFEIAIDEAKDSVNLIAQVGSINLNEAVELGKYVTKLGYKCLSAVTPFYYKFDFSEIKDYYETIVRETGNYMIIYSIPFLTGVNMSLSQFGELFENEKIIGVKFTAGDFYLLERVRKAFPDKLIFAGFDEMLLPATVLGVDGAIGSTYNINGIRAKQIFELAKNSKIDEALKIQHTTNDLIEGILSNGLYQTIKEILKLEGVDAGYCRKPMKKISQKQIEFAKELHKKFLKN.

S44 and T45 together coordinate aceneuramate. The Proton donor role is filled by Y133. K161 acts as the Schiff-base intermediate with substrate in catalysis. T163, G185, D187, E188, and S204 together coordinate aceneuramate.

It belongs to the DapA family. NanA subfamily. Homotetramer.

The protein resides in the cytoplasm. It catalyses the reaction aceneuramate = aldehydo-N-acetyl-D-mannosamine + pyruvate. It functions in the pathway amino-sugar metabolism; N-acetylneuraminate degradation; D-fructose 6-phosphate from N-acetylneuraminate: step 1/5. In terms of biological role, catalyzes the reversible aldol cleavage of N-acetylneuraminic acid (sialic acid; Neu5Ac) to form pyruvate and N-acetylmannosamine (ManNAc) via a Schiff base intermediate. The chain is N-acetylneuraminate lyase from Fusobacterium nucleatum subsp. nucleatum (strain ATCC 25586 / DSM 15643 / BCRC 10681 / CIP 101130 / JCM 8532 / KCTC 2640 / LMG 13131 / VPI 4355).